The chain runs to 2422 residues: Non-reducing polyketide synthase trt4 (2422 aa).

Residues 14 to 196 form an N-terminal acylcarrier protein transacylase domain (SAT) region; the sequence is VLFGPKCPKT…HHSDHTSVVQ (183 aa). Residues 289 to 314 form a disordered region; the sequence is VEPPDSHHNTNTTQDSDVTTNASPLT. The segment covering 297-312 has biased composition (polar residues); sequence NTNTTQDSDVTTNASP. The 417-residue stretch at 329–745 folds into the Ketosynthase family 3 (KS3) domain; that stretch reads TVPIAVTGMA…GSNAAIVLQE (417 aa). Active-site for beta-ketoacyl synthase activity residues include Cys494, His629, and His668. The segment at 856–1121 is malonyl-CoA:ACP transacylase (MAT) domain; that stretch reads LCFGGQTGNT…CPIDLSGPQA (266 aa). Residue Ser904 is the For acyl/malonyl transferase activity of the active site. The interval 1190–1316 is N-terminal hotdog fold; sequence PSLVKLLNND…GKISISSEAN (127 aa). The 306-residue stretch at 1190 to 1495 folds into the PKS/mFAS DH domain; that stretch reads PSLVKLLNND…FTCVSIQSLK (306 aa). Residues 1191–1494 form a product template (PT) domain region; the sequence is SLVKLLNNDG…TFTCVSIQSL (304 aa). His1221 serves as the catalytic Proton acceptor; for dehydratase activity. A C-terminal hotdog fold region spans residues 1345–1495; sequence SSGLKRSTVY…FTCVSIQSLK (151 aa). Catalysis depends on Asp1402, which acts as the Proton donor; for dehydratase activity. One can recognise a Carrier domain in the interval 1535–1612; that stretch reads SRSEDGLRVV…GLVQRIFPGG (78 aa). O-(pantetheine 4'-phosphoryl)serine is present on Ser1572. The interval 1615–1636 is disordered; that stretch reads AHVETHSQPPDKIGITTGDRMP. The methyltransferase (CMeT) domain stretch occupies residues 1774–2007; the sequence is QHASEHKLLH…GFNWVDWTDN (234 aa). The segment at 2036–2383 is thioesterase (TE) domain; that stretch reads NAVAEETLVY…LAPHIPTDEY (348 aa). Residues Ser2159, Asp2320, and His2352 each act as for thioesterase activity in the active site.

It catalyses the reaction 3 malonyl-CoA + acetyl-CoA + 2 S-adenosyl-L-methionine = 3,5-dimethylorsellinate + 2 S-adenosyl-L-homocysteine + 3 CO2 + 4 CoA. It participates in secondary metabolite biosynthesis; terpenoid biosynthesis. Non-reducing polyketide synthase; part of the gene cluster that mediates the biosynthesis of terretonin, a fungal meroterpenoid that acts as a mycotoxin. The first step of the pathway is the synthesis of 3,5-dimethylorsellinic acid (DMOA) by the polyketide synthase trt4. DMOA is then prenylated into farnesyl-DMOA by the polyprenyl transferase trt2. Methylation by the methyltransferase trt5 then leads to farnesyl-DMOA methyl ester which is further subject to epoxidation by the FAD-dependent monooxygenase trt8 to yield epoxyfarnesyl-DMOA methyl ester. Cyclization of epoxyfarnesyl-DMOA methyl ester by the terpene cyclase trt1 leads to a tetracycle intermediate which is in turn converted to preterretonin. Dehydrogenase trt9 comes next to transform preterretonin to preterrenoid. The FAD-dependent monooxygenase trt3 is then required for the C-hydroxylation at C16 of preterrenoid to yield terrenoid. The cytochrome P450 trt6 catalyzes three successive oxidations to transform terrenoid into an unstable intermediate, which then undergoes the D-ring expansion and unusual rearrangement of the methoxy group to afford the core skeleton of terretonin. Trt14 catalyzes the D-ring expansion of terretonin involving intramolecular methoxy rearrangement as well as the hydrolysis of the expanded D-ring and the methyl ester moiety. Finally, the nonheme iron-dependent dioxygenase trt7 accomplishes the last two oxidation reactions steps to complete the biosynthesis of terretonin. Terretonin C is produced via spontaneous decarboxylation of the terretonin precursor. Another shunt product of the terretonin biosynthesis is dihydrofarnesyl-DMOA, derived from epoxyfarnesyl-DMOA through hydrolysis of the epoxide. The protein is Non-reducing polyketide synthase trt4 of Aspergillus terreus (strain NIH 2624 / FGSC A1156).